We begin with the raw amino-acid sequence, 131 residues long: Fumarate reductase subunit C (131 aa).

3 consecutive transmembrane segments (helical) span residues 30–50 (EGTA…LFAL), 61–81 (IGFL…AAAL), and 110–130 (IKGL…VALF).

The protein belongs to the FrdC family. As to quaternary structure, part of an enzyme complex containing four subunits: a flavoprotein (FrdA), an iron-sulfur protein (FrdB), and two hydrophobic anchor proteins (FrdC and FrdD).

The protein localises to the cell inner membrane. Functionally, two distinct, membrane-bound, FAD-containing enzymes are responsible for the catalysis of fumarate and succinate interconversion; fumarate reductase is used in anaerobic growth, and succinate dehydrogenase is used in aerobic growth. Anchors the catalytic components of the fumarate reductase complex to the cell inner membrane, binds quinones. This chain is Fumarate reductase subunit C, found in Klebsiella pneumoniae (strain 342).